A 1031-amino-acid chain; its full sequence is MADPGDLESRGKADSYSVAEKKSAPKKISKKNANKAKLEDLKKELEMTEHSMKLESLLSMYETSLEKGLSENIVARNLERDGLNALTPPKQTPEWVKFCKQMFGGFSMLLWIGAILCFFAFGIRAVRDTNPNMDELYLGIVLSVVVIITGCFSYYQESKSSKIMESFKKMIPQEALVLRDGKKITINAEQCVVGDVVFVKFGDRIPADIRIVECKGLKVDNSSLTGESEPQSRAVDFTHENPIETKNLAFFSTNAVEGTATGIVVRIGDNTVMGRIANLASGLGSGKTPIALEIEHFIHIVTGVAVFLGVSFLIISLAMGYHWLEAIIFLIGIIVANVPEGLLATVTVCLTLTAKKMAKKNCLVKHLEAVETLGSTSVICSDKTGTLTQNRMTVAHMWFDKMIVEADTTEDQSGIAHDKGSLTWKSLAKVAALCSRAEFKPNQNDVAVLRKECTGDASETAILKFVELSVGNVMDIRAKNKKVTEIPFNSTNKYQVSVHEQENSSGYLLVMKGAPEKVLERCSTILINGEEQPLKDDVIEIYNKAYDELGGLGERVLGFCHYYLPVDQYPKGFLFKTEEEQNFPLEGLCFLGLLSMIDPPRAAVPDAVSKCRSAGIKVIMVTGDHPITAKAIAKGVGIISEGNECEEDIALRLNIPLEDLSEDQKKSAKACVIHGAKLKDIKNEELDKILCDHTEIVFARTSPQQKLIIVEGCQRQGAIVAVTGDGVNDSPALKKADIGVAMGIAGSDVSKQAADMILLDDNFASIVTGVEEGRLIFDNLKKSIVYTLTSNIPEISPFLMFILFGIPLPLGTITILCIDLGTDMVPAISLAYEKAESDIMKRHPRNPIRDKLVNERLISLAYGQIGMMQATAGFFTYFIILAENGFLPSYLFGLRSQWDDMSNNNLLDSFGSEWTYFQRKEIELTCQTAFFTTIVVVQWADLIISKTRRLSLFQQGMTNWFLNFGLFFETALAAFLQYTPGVNTGLRLRPMNFTWWLPGLPFSLLIFVYDEIRRYLLRKNPGGWVEKETYY.

The disordered stretch occupies residues 1–33; sequence MADPGDLESRGKADSYSVAEKKSAPKKISKKNA. The span at 7–23 shows a compositional bias: basic and acidic residues; that stretch reads LESRGKADSYSVAEKKS. The segment covering 24–33 has biased composition (basic residues); that stretch reads APKKISKKNA. The next 4 helical transmembrane spans lie at 102-123, 136-155, 297-319, and 326-354; these read MFGG…AFGI, LYLG…FSYY, FIHI…SLAM, and AIIF…TLTA. Catalysis depends on aspartate 382, which acts as the 4-aspartylphosphate intermediate. An ATP-binding site is contributed by lysine 512. Residues aspartate 725 and aspartate 729 each coordinate Mg(2+). A run of 4 helical transmembrane segments spans residues 795–818, 857–882, 924–944, and 961–986; these read ISPF…ILCI, LISL…IILA, LTCQ…DLII, and FLNF…NTGL.

This sequence belongs to the cation transport ATPase (P-type) (TC 3.A.3) family. Type IIC subfamily. In terms of assembly, the sodium/potassium-transporting ATPase is composed of a catalytic alpha subunit, an auxiliary non-catalytic beta subunit and an additional regulatory subunit.

Its subcellular location is the cell membrane. It catalyses the reaction K(+)(out) + Na(+)(in) + ATP + H2O = K(+)(in) + Na(+)(out) + ADP + phosphate + H(+). With respect to regulation, this alpha subunit is resistant to ouabain. In terms of biological role, this is the catalytic component of the active enzyme, which catalyzes the hydrolysis of ATP coupled with the exchange of sodium and potassium ions across the plasma membrane. This action creates the electrochemical gradient of sodium and potassium ions, providing the energy for active transport of various nutrients. The polypeptide is Sodium/potassium-transporting ATPase subunit alpha (Hydra vulgaris (Hydra)).